A 684-amino-acid chain; its full sequence is DNA ligase (684 aa).

NAD(+) is bound by residues 48–52, 97–98, and Glu-129; these read DYEYD and SL. The active-site N6-AMP-lysine intermediate is Lys-131. Arg-152, Glu-189, Lys-310, and Lys-334 together coordinate NAD(+). Residues Cys-429, Cys-432, Cys-447, and Cys-452 each coordinate Zn(2+). The BRCT domain occupies 609–684; the sequence is AQEGSLSGMS…ISWEELQAMI (76 aa).

This sequence belongs to the NAD-dependent DNA ligase family. LigA subfamily. Requires Mg(2+) as cofactor. Mn(2+) is required as a cofactor.

The catalysed reaction is NAD(+) + (deoxyribonucleotide)n-3'-hydroxyl + 5'-phospho-(deoxyribonucleotide)m = (deoxyribonucleotide)n+m + AMP + beta-nicotinamide D-nucleotide.. Functionally, DNA ligase that catalyzes the formation of phosphodiester linkages between 5'-phosphoryl and 3'-hydroxyl groups in double-stranded DNA using NAD as a coenzyme and as the energy source for the reaction. It is essential for DNA replication and repair of damaged DNA. The chain is DNA ligase from Bdellovibrio bacteriovorus (strain ATCC 15356 / DSM 50701 / NCIMB 9529 / HD100).